A 56-amino-acid chain; its full sequence is Large ribosomal subunit protein bL33 (56 aa).

The segment covering 1–12 (MASKGGRDKIKL) has biased composition (basic and acidic residues). Residues 1 to 30 (MASKGGRDKIKLESTAGTGHFYTTTKNKRT) are disordered. Over residues 15–25 (TAGTGHFYTTT) the composition is skewed to polar residues.

Belongs to the bacterial ribosomal protein bL33 family.

In Ralstonia nicotianae (strain ATCC BAA-1114 / GMI1000) (Ralstonia solanacearum), this protein is Large ribosomal subunit protein bL33.